Reading from the N-terminus, the 453-residue chain is Ubiquitin-associated protein 1 (453 aa).

The UMA domain occupies 19–65 (LDDVPFKLNEKFRCPSKVGLPIGFCLSDCNAILSDLQYDFNLERRTV). Positions 83–93 (EAIRTDSESER) are enriched in basic and acidic residues. 3 disordered regions span residues 83-119 (EAIR…QDIV), 189-223 (LQSQ…AKTG), and 260-335 (FPKL…AGTT). Positions 189–199 (LQSQPQSSVSP) are enriched in low complexity. Polar residues predominate over residues 285–328 (NLSNGTPPSLQRTASNNNTTLPQEQPVFAQNGTPKQSNPVTVTS). 2 UBA domains span residues 340–381 (SPSE…LFTH) and 403–449 (GSEE…LMTR).

Component of an ESCRT-I complex (endosomal sorting complex required for transport I).

It is found in the cytoplasm. Its subcellular location is the cytosol. The protein localises to the endosome. Functionally, component of the ESCRT-I complex, a regulator of vesicular trafficking process. Binds to ubiquitinated cargo proteins and is required for the sorting of endocytic ubiquitinated cargos into multivesicular bodies (MVBs). The sequence is that of Ubiquitin-associated protein 1 from Danio rerio (Zebrafish).